Here is a 271-residue protein sequence, read N- to C-terminus: 3-methyl-2-oxobutanoate hydroxymethyltransferase (271 aa).

Mg(2+) is bound by residues aspartate 53 and aspartate 92. 3-methyl-2-oxobutanoate-binding positions include 53–54, aspartate 92, and lysine 120; that span reads DS. Position 122 (glutamate 122) interacts with Mg(2+). The active-site Proton acceptor is glutamate 189.

The protein belongs to the PanB family. In terms of assembly, homodecamer; pentamer of dimers. Mg(2+) serves as cofactor.

It is found in the cytoplasm. It carries out the reaction 3-methyl-2-oxobutanoate + (6R)-5,10-methylene-5,6,7,8-tetrahydrofolate + H2O = 2-dehydropantoate + (6S)-5,6,7,8-tetrahydrofolate. The protein operates within cofactor biosynthesis; (R)-pantothenate biosynthesis; (R)-pantoate from 3-methyl-2-oxobutanoate: step 1/2. Its function is as follows. Catalyzes the reversible reaction in which hydroxymethyl group from 5,10-methylenetetrahydrofolate is transferred onto alpha-ketoisovalerate to form ketopantoate. This is 3-methyl-2-oxobutanoate hydroxymethyltransferase from Paraburkholderia phymatum (strain DSM 17167 / CIP 108236 / LMG 21445 / STM815) (Burkholderia phymatum).